Consider the following 71-residue polypeptide: uncharacterized protein (71 aa).

Residues 44–66 form a helical membrane-spanning segment; that stretch reads LFFLVFRRLFSWFLVLLPSPRFF.

The protein localises to the membrane. This is an uncharacterized protein from Saccharomyces cerevisiae (strain ATCC 204508 / S288c) (Baker's yeast).